A 282-amino-acid chain; its full sequence is Snake venom serine protease NaSP (282 aa).

Residues 1-18 (MVLIRVLASLLILQLSYS) form the signal peptide. Residues 19-56 (KSLDDGAKESAYDDEIQQSSWGNSTVNTTLTETVVIQL) constitute a propeptide that is removed on maturation. Residues Asn-41 and Asn-45 are each glycosylated (N-linked (GlcNAc...) asparagine). Residues 57-280 (IMGGSECYKS…YIDWIRGIIA (224 aa)) form the Peptidase S1 domain. Intrachain disulfides connect Cys-63–Cys-195, Cys-82–Cys-98, Cys-174–Cys-241, Cys-206–Cys-220, and Cys-231–Cys-256. Catalysis depends on His-97, which acts as the Charge relay system. An N-linked (GlcNAc...) asparagine glycan is attached at Asn-135. Asp-142 acts as the Charge relay system in catalysis. N-linked (GlcNAc...) asparagine glycosylation is found at Asn-149 and Asn-153. Residue Ser-235 is the Charge relay system of the active site.

Belongs to the peptidase S1 family. Snake venom subfamily. In terms of assembly, monomer. In terms of tissue distribution, expressed by the venom gland.

Its subcellular location is the secreted. Snake venom serine protease that may act in the hemostasis system of the prey. The chain is Snake venom serine protease NaSP from Naja atra (Chinese cobra).